The sequence spans 101 residues: Small ribosomal subunit protein uS10 (101 aa).

The protein belongs to the universal ribosomal protein uS10 family. As to quaternary structure, part of the 30S ribosomal subunit.

Involved in the binding of tRNA to the ribosomes. The chain is Small ribosomal subunit protein uS10 from Brachyspira pilosicoli (Serpulina pilosicoli).